The sequence spans 522 residues: Glucans biosynthesis protein G (522 aa).

Positions 1–33 (MLDNKFGFKQRVASLRWLSAAIMLSVSAVPAWA) are cleaved as a signal peptide.

This sequence belongs to the OpgD/OpgG family.

It is found in the periplasm. It participates in glycan metabolism; osmoregulated periplasmic glucan (OPG) biosynthesis. Functionally, involved in the biosynthesis of osmoregulated periplasmic glucans (OPGs). In Pectobacterium atrosepticum (strain SCRI 1043 / ATCC BAA-672) (Erwinia carotovora subsp. atroseptica), this protein is Glucans biosynthesis protein G.